Here is a 93-residue protein sequence, read N- to C-terminus: Putative pterin-4-alpha-carbinolamine dehydratase (93 aa).

It belongs to the pterin-4-alpha-carbinolamine dehydratase family.

The catalysed reaction is (4aS,6R)-4a-hydroxy-L-erythro-5,6,7,8-tetrahydrobiopterin = (6R)-L-erythro-6,7-dihydrobiopterin + H2O. This chain is Putative pterin-4-alpha-carbinolamine dehydratase, found in Nostoc sp. (strain PCC 7120 / SAG 25.82 / UTEX 2576).